A 448-amino-acid chain; its full sequence is Proton extrusion protein PxcA (448 aa).

A run of 4 helical transmembrane segments spans residues 231 to 251 (ILLL…FFLI), 323 to 343 (IDSI…VLVL), 372 to 392 (LIIL…WEVI), and 408 to 428 (FNFL…KYWI).

Belongs to the CemA family.

The protein localises to the cell inner membrane. In terms of biological role, required for H(+) efflux immediately after light irradiation to form a rapid H(+) concentration gradient across the thylakoid membranes. Together with PxcL, contributes to transient H(+) uptake following dark to light transition. The sequence is that of Proton extrusion protein PxcA from Rippkaea orientalis (strain PCC 8801 / RF-1) (Cyanothece sp. (strain PCC 8801)).